Consider the following 589-residue polypeptide: BTB/POZ domain and ankyrin repeat-containing protein NPR3 (589 aa).

A disordered region spans residues 1 to 25 (METSTISFSSSSPPSPPPPQPAPGD). The segment covering 13 to 22 (PPSPPPPQPA) has biased composition (pro residues). Residues 52 to 137 (AEIVLASGGG…LYTGRLRSAP (86 aa)) form the BTB domain. The segment at 140 to 154 (AAACLDDGCSHDACR) adopts a C2HC NPR-type zinc-finger fold. Zn(2+) contacts are provided by cysteine 143, cysteine 148, histidine 150, and cysteine 153. ANK repeat units lie at residues 260–290 (KRVR…TLDD), 292–319 (FAIH…NVNL), and 323–352 (SGYT…SVLE). The salicylic acid-binding core (SBC) stretch occupies residues 382–521 (ERSKAYLCIG…LDKFLNEEST (140 aa)). Salicylate is bound at residue arginine 433. Residues 555–589 (DKAAGAAISSSTSASSSPRYETKLRPGNKKGKLSR) are disordered. The span at 558–571 (AGAAISSSTSASSS) shows a compositional bias: low complexity. Residues 580–589 (PGNKKGKLSR) are compositionally biased toward basic residues.

The protein belongs to the plant 'ANKYRIN-BTB/POZ' family. 'NPR1-like' subfamily. As to quaternary structure, interacts with TGA2.1, TGA2.2, TGA2.3, LG2, TGAL1, TGAL4, NRR, RH1, RH2 and RH3.

It is found in the nucleus. It functions in the pathway protein modification; protein ubiquitination. In terms of biological role, salicylic acid (SA)-binding substrate-specific adapter of an E3 ubiquitin-protein ligase complex (CUL3-RBX1-BTB) which mediates the ubiquitination and subsequent proteasomal degradation of target proteins. Involved in defense response against the bacterial blight disease caused by Xanthomonas oryzae pv. oryzae (Xoo). Plants expressing an NPR3/NH3 transgene driven by its native promoter show enhanced resistance to the Xoo pathogen, and exhibit elevated sensitivity to benzothiadiazole (BTH) treatment and enhanced induction of defense-related genes upon treatment with BTH. Intriguingly, constitutive over-expression of NPR3/NH3 with a ubiquitin promoter does not confer disease resistance to Xoo. In Oryza sativa subsp. japonica (Rice), this protein is BTB/POZ domain and ankyrin repeat-containing protein NPR3.